A 358-amino-acid chain; its full sequence is Hydroxyproline O-arabinosyltransferase 2 (358 aa).

A helical; Signal-anchor membrane pass occupies residues 7-26 (YFFPILMTLSLFLIIRYNYI).

As to expression, ubiquitous.

Its subcellular location is the golgi apparatus. It is found in the cis-Golgi network membrane. The enzyme catalyses trans-4-hydroxy-L-prolyl-[protein] + UDP-beta-L-arabinofuranose = O-(beta-L-arabinofuranosyl)-trans-4-hydroxy-L-prolyl-[protein] + UDP + H(+). Its function is as follows. Glycosyltransferase involved in the O-arabinosylation of several proteins including extensins and small signaling peptides. Catalyzes the transfer of the initial L-arabinose to the hydroxyl group of Hyp residues. Contributes redundantly with HPAT1 and HPAT3 to arabinosylation of EXT3. This chain is Hydroxyproline O-arabinosyltransferase 2, found in Arabidopsis thaliana (Mouse-ear cress).